We begin with the raw amino-acid sequence, 190 residues long: MRVIGIDPGTAIVGYGIIDYDKNKYSIVDYGVVLTSKDLSTEERLEIVYDEIDKILKKYKPEFMAIEDLFYFKNNKTVISVAQARGVILLAGKQNNIAMTSYTPLQVKIGITGYGKAEKKQIQQMVQKFLGLSEIPKPDDAADALAICITHINSLGSKLSFGRTNNLNKIVVPSGTNKISLEEYKNLLKK.

Residues Asp-7, Glu-67, and Asp-140 contribute to the active site. Residues Asp-7, Glu-67, and Asp-140 each coordinate Mg(2+).

Belongs to the RuvC family. Homodimer which binds Holliday junction (HJ) DNA. The HJ becomes 2-fold symmetrical on binding to RuvC with unstacked arms; it has a different conformation from HJ DNA in complex with RuvA. In the full resolvosome a probable DNA-RuvA(4)-RuvB(12)-RuvC(2) complex forms which resolves the HJ. The cofactor is Mg(2+).

The protein resides in the cytoplasm. The enzyme catalyses Endonucleolytic cleavage at a junction such as a reciprocal single-stranded crossover between two homologous DNA duplexes (Holliday junction).. The RuvA-RuvB-RuvC complex processes Holliday junction (HJ) DNA during genetic recombination and DNA repair. Endonuclease that resolves HJ intermediates. Cleaves cruciform DNA by making single-stranded nicks across the HJ at symmetrical positions within the homologous arms, yielding a 5'-phosphate and a 3'-hydroxyl group; requires a central core of homology in the junction. The consensus cleavage sequence is 5'-(A/T)TT(C/G)-3'. Cleavage occurs on the 3'-side of the TT dinucleotide at the point of strand exchange. HJ branch migration catalyzed by RuvA-RuvB allows RuvC to scan DNA until it finds its consensus sequence, where it cleaves and resolves the cruciform DNA. This is Crossover junction endodeoxyribonuclease RuvC from Fusobacterium nucleatum subsp. nucleatum (strain ATCC 25586 / DSM 15643 / BCRC 10681 / CIP 101130 / JCM 8532 / KCTC 2640 / LMG 13131 / VPI 4355).